The primary structure comprises 309 residues: Prepilin leader peptidase/N-methyltransferase (309 aa).

A helical transmembrane segment spans residues 35–55 (MQLAFAIVLGLVVGSFINVVV). 4 residues coordinate Zn(2+): C96, C99, C121, and C124. A run of 6 helical transmembrane segments spans residues 147 to 167 (LALFGPSGAALAAFGLCAALL), 183 to 203 (LTLPLLWAGLCVNLWGTFASL), 207 to 227 (VIGAIAGYLFLWCILWLFKLL), 230 to 250 (IEGIGYGDLKLLAALGAWLGW), 253 to 273 (LPQVVLIAAVAGAAVGLVATW), and 288 to 308 (FLAAGGAATLFFGTPFYLLLG).

The protein belongs to the peptidase A24 family. Zn(2+) serves as cofactor.

It localises to the cell inner membrane. It catalyses the reaction Typically cleaves a -Gly-|-Phe- bond to release an N-terminal, basic peptide of 5-8 residues from type IV prepilin, and then N-methylates the new N-terminal amino group, the methyl donor being S-adenosyl-L-methionine.. Its function is as follows. Plays an essential role in type IV pili and type II pseudopili formation by proteolytically removing the leader sequence from substrate proteins and subsequently monomethylating the alpha-amino group of the newly exposed N-terminal phenylalanine. The sequence is that of Prepilin leader peptidase/N-methyltransferase (gspO) from Burkholderia pseudomallei (strain K96243).